Consider the following 272-residue polypeptide: Dioscorin DB3L (272 aa).

Residues 1–25 (MSSSTLFHLFLLSSLLFSCLSNARP) form the signal peptide. The Alpha-carbonic anhydrase domain occupies 28–263 (DDFSYIEGSP…LKFRTIFFYP (236 aa)). Residues cysteine 53 and cysteine 213 are joined by a disulfide bond.

Belongs to the alpha-class carbonic anhydrase family. In terms of assembly, homodimer; disulfide-linked. Post-translationally, not glycosylated. As to expression, expressed in tuber (at protein level).

Its activity is regulated as follows. Loss of hemagglutinating activity by EDTA treatment. The activity is fully recovered by the addition of 5 mM Ca(2+) ions, but not with Mg(2+) and Mn 2(+). Hemagglutination activity is inhibited by maltose and its derivatives, with maltopentaose and maltohexaose being the best inhibitors followed by maltose and iso maltose. Not inhibited by glycoproteins. Functionally, maltose-binding lectin. No affinity is detected toward glucose. Has hemagglutinating activity against rabbit erythrocytes at 3.9 ug/ml. No carbonate dehydratase or trypsin inhibitor activity detected by measuring the hydrolysis of 4-nitrophenyl acetate or the inhibition of bovine trypsin-catalyzed hydrolysis of N-benzoyl-L-arginine ethyl ester, respectively. The sequence is that of Dioscorin DB3L from Dioscorea polystachya (Chinese yam).